The primary structure comprises 306 residues: MGNLVIGSRGSELALWQANHIKERLKKECFIESEIQIVKTKGDKILDTPLNKIGGKGLFTKELEELLLKGAIDLAVHSLKDVPVVFEKGLDLACITKRADVRDTFLSVKFPDLMSLPKGAKVGTTSLRRSMQIKLKRQDLDTESLRGNVQTRLKKLECGEFDAIILAEAGLCRLEIQGAKYRKAFSVEEMIPSMGQGALGVEMLKNHKHFATLQKLNDEESAFCCHLEREFVKGLNGGCQIPIGVHASLMGDRVKIQAVLGLPNGKEVITKEKRGDKTKAFDLVQDLLEEFLQSGAKEILEKAQLF.

S-(dipyrrolylmethanemethyl)cysteine is present on Cys-239.

The protein belongs to the HMBS family. As to quaternary structure, monomer. It depends on dipyrromethane as a cofactor.

It carries out the reaction 4 porphobilinogen + H2O = hydroxymethylbilane + 4 NH4(+). Its pathway is porphyrin-containing compound metabolism; protoporphyrin-IX biosynthesis; coproporphyrinogen-III from 5-aminolevulinate: step 2/4. Tetrapolymerization of the monopyrrole PBG into the hydroxymethylbilane pre-uroporphyrinogen in several discrete steps. The polypeptide is Porphobilinogen deaminase (Helicobacter pylori (strain G27)).